A 332-amino-acid chain; its full sequence is MNQTEAAPVVSVSRVYAHVNEEMPREYWDYENMQEVFGYQDNYEIIRKVGRGKYSEVFEGLNVLNNSKCIIKVLKPVKYKKIKREIKILQNLAGGPNIISLLDIVRDPESKTPSLIFEFVDNIDFRTLYPTLSDYDIRYYSYELLKALDFCHSRGIMHRDVKPHNVMIDHKKRKLRLIDWGLAEFYHAGMEYNVRVASRYFKGPELLVDFREYDYSLDIWSFGVMFAALIFKKDTFFRGRDNYDQLVKIAKVLGTDELFAYVQKYQIVLDRQYDNILGQYPKRDWYSFVNRDNRSLANDEAIDLLNRLLRYDHQERLTCQEAMAHPYFQVLK.

The Protein kinase domain maps to 43 to 327 (YEIIRKVGRG…TCQEAMAHPY (285 aa)). Residues 49-57 (VGRGKYSEV) and K72 contribute to the ATP site. The active-site Proton acceptor is the D160.

This sequence belongs to the protein kinase superfamily. Ser/Thr protein kinase family. CK2 subfamily. In terms of assembly, tetramer composed of two alpha chains, one beta chain and one beta' chain.

The catalysed reaction is L-seryl-[protein] + ATP = O-phospho-L-seryl-[protein] + ADP + H(+). It catalyses the reaction L-threonyl-[protein] + ATP = O-phospho-L-threonyl-[protein] + ADP + H(+). In terms of biological role, catalytic subunit of a constitutively active serine/threonine-protein kinase complex that phosphorylates a large number of substrates containing acidic residues C-terminal to the phosphorylated serine or threonine. The chain is Casein kinase II subunit alpha from Schizosaccharomyces pombe (strain 972 / ATCC 24843) (Fission yeast).